Reading from the N-terminus, the 111-residue chain is Heavy metal-associated isoprenylated plant protein 10 (111 aa).

The HMA domain occupies 1–68; that stretch reads MQETVVFEWG…ICDYVDITAV (68 aa). A disordered region spans residues 68-111; the sequence is VGPEGQPAQNRNPVKKPEPKVIRGRPYPPQKKTPGKNSDECIIL. At C108 the chain carries Cysteine methyl ester. Residue C108 is the site of S-farnesyl cysteine attachment. A propeptide spans 109-111 (removed in mature form); the sequence is IIL.

This sequence belongs to the HIPP family.

Its function is as follows. Probable heavy-metal-binding protein. The chain is Heavy metal-associated isoprenylated plant protein 10 from Arabidopsis thaliana (Mouse-ear cress).